The following is a 372-amino-acid chain: Envelope phospholipase OPG057 (372 aa).

Residues 153–156 (YPPL) carry the YPPL motif. 2 S-palmitoyl cysteine; by host lipidation sites follow: Cys185 and Cys186. Residues 307-334 (FTIQNNTKLLIVDDEYVHITSANFDGTH) form the PLD phosphodiesterase domain.

The protein belongs to the orthopoxvirus OPG057 family. As to quaternary structure, interacts with protein OPG190/B5. In terms of processing, palmitoylated. Attachment of the palmitate moiety is essential for correct intracellular targeting and protein function.

It localises to the virion membrane. It is found in the host Golgi apparatus. Its subcellular location is the host trans-Golgi network. The protein localises to the host endoplasmic reticulum membrane. It catalyses the reaction a 1,2-diacyl-sn-glycero-3-phosphocholine + H2O = a 1,2-diacyl-sn-glycero-3-phosphate + choline + H(+). Functionally, major envelope protein that plays a role in the biogenesis of the viral double membrane and in egress of virus from the host cell. Produces the wrapped form of virus that is required for cell-to-cell spread. Acts as a lipase with broad specificity including phospholipase C, phospholipase A, and triacylglycerol lipase activities. This chain is Envelope phospholipase OPG057 (OPG057), found in Vaccinia virus (strain Western Reserve) (VACV).